The primary structure comprises 217 residues: Ribosomal RNA small subunit methyltransferase G (217 aa).

S-adenosyl-L-methionine-binding positions include Gly-79, Leu-84, 130–131 (IE), and Arg-145.

This sequence belongs to the methyltransferase superfamily. RNA methyltransferase RsmG family.

Its subcellular location is the cytoplasm. The catalysed reaction is guanosine(527) in 16S rRNA + S-adenosyl-L-methionine = N(7)-methylguanosine(527) in 16S rRNA + S-adenosyl-L-homocysteine. Its function is as follows. Specifically methylates the N7 position of guanine in position 527 of 16S rRNA. The polypeptide is Ribosomal RNA small subunit methyltransferase G (Hahella chejuensis (strain KCTC 2396)).